The chain runs to 142 residues: Large ribosomal subunit protein bL19 (142 aa).

Belongs to the bacterial ribosomal protein bL19 family.

Its function is as follows. This protein is located at the 30S-50S ribosomal subunit interface and may play a role in the structure and function of the aminoacyl-tRNA binding site. This is Large ribosomal subunit protein bL19 from Psychrobacter cryohalolentis (strain ATCC BAA-1226 / DSM 17306 / VKM B-2378 / K5).